The chain runs to 681 residues: Elongation factor G (681 aa).

The region spanning 5–279 (KNIRNIGIIA…SIVNFLPSPI (275 aa)) is the tr-type G domain. GTP contacts are provided by residues 14–21 (AHVDAGKT), 82–86 (DTPGH), and 136–139 (NKLD).

The protein belongs to the TRAFAC class translation factor GTPase superfamily. Classic translation factor GTPase family. EF-G/EF-2 subfamily.

The protein resides in the cytoplasm. Its function is as follows. Catalyzes the GTP-dependent ribosomal translocation step during translation elongation. During this step, the ribosome changes from the pre-translocational (PRE) to the post-translocational (POST) state as the newly formed A-site-bound peptidyl-tRNA and P-site-bound deacylated tRNA move to the P and E sites, respectively. Catalyzes the coordinated movement of the two tRNA molecules, the mRNA and conformational changes in the ribosome. This chain is Elongation factor G, found in Carsonella ruddii (strain PV).